Reading from the N-terminus, the 156-residue chain is Small ribosomal subunit protein bS6 (156 aa).

Residues 95-156 (AITETSPLAK…DRDEQSEDSE (62 aa)) form a disordered region. A compositionally biased stretch (basic and acidic residues) spans 117 to 126 (RSGRDRDESG).

The protein belongs to the bacterial ribosomal protein bS6 family.

Binds together with bS18 to 16S ribosomal RNA. In Nitrosococcus oceani (strain ATCC 19707 / BCRC 17464 / JCM 30415 / NCIMB 11848 / C-107), this protein is Small ribosomal subunit protein bS6.